The sequence spans 78 residues: Large ribosomal subunit protein bL28 (78 aa).

Belongs to the bacterial ribosomal protein bL28 family.

This is Large ribosomal subunit protein bL28 from Trichodesmium erythraeum (strain IMS101).